The following is a 102-amino-acid chain: Cell division topological specificity factor (102 aa).

Belongs to the MinE family.

Functionally, prevents the cell division inhibition by proteins MinC and MinD at internal division sites while permitting inhibition at polar sites. This ensures cell division at the proper site by restricting the formation of a division septum at the midpoint of the long axis of the cell. The sequence is that of Cell division topological specificity factor from Synechococcus sp. (strain CC9605).